Consider the following 296-residue polypeptide: MTTTLTRPADGEGSVQVQQDASVRIQEGALVIAVYGKGGIGKSTTSSNLSAAFSKLGKRVLQIGCDPKHDSTFTLTHRMVPTVIDILEEVDFHSEELRPDDFMFEGFNGVKCVESGGPPAGTGCGGYVTGQTVKLLKEHHLLEDTDVVIFDVLGDVVCGGFAAPLQHANYCLIVTANDFDSIFAMNRIVAAINAKAKNYKVRLGGVIANRSAELDQIEKFNQQTGLKTMAHFKNVDAIRRSRLKKCTIFEMDSSDEGVMECQNEYLSLAQKMLDNVEPLEAEPLKDREIFDLLGFD.

ATP-binding positions include 39-44 (GIGKST) and K68. S43 lines the Mg(2+) pocket. C124 and C158 together coordinate [4Fe-4S] cluster. 209–210 (NR) is a binding site for ATP.

This sequence belongs to the NifH/BchL/ChlL family. In terms of assembly, homodimer. Protochlorophyllide reductase is composed of three subunits; ChlL, ChlN and ChlB. [4Fe-4S] cluster is required as a cofactor.

The enzyme catalyses chlorophyllide a + oxidized 2[4Fe-4S]-[ferredoxin] + 2 ADP + 2 phosphate = protochlorophyllide a + reduced 2[4Fe-4S]-[ferredoxin] + 2 ATP + 2 H2O. Its pathway is porphyrin-containing compound metabolism; chlorophyll biosynthesis (light-independent). Its function is as follows. Component of the dark-operative protochlorophyllide reductase (DPOR) that uses Mg-ATP and reduced ferredoxin to reduce ring D of protochlorophyllide (Pchlide) to form chlorophyllide a (Chlide). This reaction is light-independent. The L component serves as a unique electron donor to the NB-component of the complex, and binds Mg-ATP. The sequence is that of Light-independent protochlorophyllide reductase iron-sulfur ATP-binding protein from Prochlorococcus marinus (strain MIT 9313).